Reading from the N-terminus, the 417-residue chain is Tyrosine--tRNA ligase (417 aa).

Y39 provides a ligand contact to L-tyrosine. The short motif at 44-53 (PTASSLHAGS) is the 'HIGH' region element. L-tyrosine contacts are provided by Y176 and Q180. Residues 236–240 (KMGKS) carry the 'KMSKS' region motif. Residue K239 coordinates ATP. The S4 RNA-binding domain maps to 350-417 (TGLLILLVQA…KKKHVLIKPL (68 aa)).

It belongs to the class-I aminoacyl-tRNA synthetase family. TyrS type 1 subfamily. As to quaternary structure, homodimer.

The protein resides in the cytoplasm. The enzyme catalyses tRNA(Tyr) + L-tyrosine + ATP = L-tyrosyl-tRNA(Tyr) + AMP + diphosphate + H(+). In terms of biological role, catalyzes the attachment of tyrosine to tRNA(Tyr) in a two-step reaction: tyrosine is first activated by ATP to form Tyr-AMP and then transferred to the acceptor end of tRNA(Tyr). The polypeptide is Tyrosine--tRNA ligase (Bartonella henselae (strain ATCC 49882 / DSM 28221 / CCUG 30454 / Houston 1) (Rochalimaea henselae)).